Consider the following 1021-residue polypeptide: Outer capsid protein P3 (1021 aa).

The protein belongs to the phytoreovirus inner capsid protein P3 family. As to quaternary structure, homodimer. Homomultimer.

The protein localises to the virion. The protein resides in the host cytoplasm. Functionally, capsid protein which self-assembles to form the inner icosahedral capsid with a T=2 symmetry, and consisting of 60 P3 dimers. This is Outer capsid protein P3 from Nephotettix cincticeps (Green rice leafhopper).